The sequence spans 49 residues: Large ribosomal subunit protein bL33 (49 aa).

Belongs to the bacterial ribosomal protein bL33 family.

The sequence is that of Large ribosomal subunit protein bL33 from Streptococcus pyogenes serotype M18 (strain MGAS8232).